The following is a 128-amino-acid chain: Cytochrome c' (128 aa).

Residues glutamine 13, glutamine 17, glutamate 69, threonine 70, cysteine 118, cysteine 121, and histidine 122 each contribute to the heme c site.

Binds 1 heme c group covalently per subunit.

In terms of biological role, cytochrome c' is the most widely occurring bacterial c-type cytochrome. Cytochromes c' are high-spin proteins and the heme has no sixth ligand. Their exact function is not known. The chain is Cytochrome c' from Magnetospirillum fulvum (Rhodospirillum fulvum).